The sequence spans 125 residues: Small ribosomal subunit protein eS8 (125 aa).

Positions 1–11 (MAISQGKSTRL) are enriched in polar residues. Residues 1-38 (MAISQGKSTRLPSGARNVANRGKRKAELGRDPAETRVD) form a disordered region. Positions 25-38 (KAELGRDPAETRVD) are enriched in basic and acidic residues.

The protein belongs to the eukaryotic ribosomal protein eS8 family. In terms of assembly, part of the 30S ribosomal subunit.

This chain is Small ribosomal subunit protein eS8, found in Methanobrevibacter smithii (strain ATCC 35061 / DSM 861 / OCM 144 / PS).